A 276-amino-acid chain; its full sequence is MDFSDLKKPGKVFFTITDEPEIKNGFQLKDGLNIIDSDKEVPQEFDCDYKPIVPNXLYFSEPKYICEYMAYGIYLREVYLPDDPKLKITRMKNFPCGKSMMYGANMIILGKKHKLSDPETYEYIEKCGGKLRYDGDNALLMAAENGYYEVVTYLINKGCDPRSDYDYALRSAAEKGHIDVVKLLLEKGADISSHNHWPLSYAALEGKFEMVKFLISRGADVRAKNYNPIKYALDGGHREIADYMLDLCPEIGSVSDDDTYDSDSSDYSEDDSESIN.

ANK repeat units follow at residues 134–163 (DGDN…DPRS), 164–193 (DYDY…DISS), 195–223 (NHWP…DVRA), and 225–253 (NYNP…EIGS). Positions 254 to 276 (VSDDDTYDSDSSDYSEDDSESIN) are disordered. Positions 255–276 (SDDDTYDSDSSDYSEDDSESIN) are enriched in acidic residues.

This is Putative ankyrin repeat protein R838 from Acanthamoeba polyphaga (Amoeba).